A 501-amino-acid chain; its full sequence is Armadillo repeat-containing protein 6 (501 aa).

Phosphoserine is present on S64. ARM repeat units follow at residues 220-264 (GVLP…HAHN), 274-318 (KGLK…DLGG), 319-369 (LSIL…RAGG), and 370-412 (TESI…VEGG). H263 bears the Pros-methylhistidine mark.

The protein belongs to the ARMC6 family. Methylated at His-263 by METTL9.

The sequence is that of Armadillo repeat-containing protein 6 (ARMC6) from Homo sapiens (Human).